We begin with the raw amino-acid sequence, 389 residues long: Apicidin F cluster transcription factor apf2 (389 aa).

Polar residues-rich tracts occupy residues 1–13 and 75–84; these read MSPPSQDWSTITD and PDSATPKPSL. Disordered regions lie at residues 1-27, 65-84, and 219-239; these read MSPPSQDWSTITDANERRKAQNRVAQR, PQSVEDHDTNPDSATPKPSL, and EVPNLGDSNEGSRSISTTKQP. Residues 12–38 are basic DNA-binding region; sequence TDANERRKAQNRVAQRNYRSRQKLRVE. ANK repeat units follow at residues 241–270, 274–303, 307–336, and 357–386; these read EFKTPVLTAIAKGKLDIARLLISSGANIDT, HGRTNLHYAVSRSDAKTVRSLLELGADLLM, SGVTALHMAVGADDQDMVKLLLGWCEQQDR, and QNMTPLHLCVVMERMDMLKILLDYGADVNI.

It belongs to the bZIP family. Highly divergent.

The protein resides in the nucleus. Functionally, transcription factor that regulates the expression of the gene cluster that mediates the biosynthesis of apicidin F. Binds to the eight-base-pair motif 5'-TGACGTGA-3' called the 'Api-box' that is found in all promoters of the apicidin F cluster except in the promoter region of apf2 itself. The polypeptide is Apicidin F cluster transcription factor apf2 (Gibberella fujikuroi (strain CBS 195.34 / IMI 58289 / NRRL A-6831) (Bakanae and foot rot disease fungus)).